The following is a 992-amino-acid chain: Vacuolar membrane protease (992 aa).

Residues 1-24 are Cytoplasmic-facing; sequence MSPAMANPRVRKFNPIAFTPLPVT. A helical transmembrane segment spans residues 25 to 45; it reads FITTIVYLAVLILVLVTYLVV. Over 46–390 the chain is Vacuolar; the sequence is PPAPTLEMSP…SAFAVFRLHT (345 aa). N-linked (GlcNAc...) asparagine glycosylation is found at Asn59, Asn115, and Asn118. Residues His174 and Asp186 each coordinate Zn(2+). Catalysis depends on Glu220, which acts as the Proton acceptor. A Zn(2+)-binding site is contributed by Glu221. Asn237 carries an N-linked (GlcNAc...) asparagine glycan. Residues Glu246 and His319 each contribute to the Zn(2+) site. The chain crosses the membrane as a helical span at residues 391–411; the sequence is LFALSVTLLVIGPLVLFITSI. Topologically, residues 412 to 446 are cytoplasmic; the sequence is ALSKTDRMYLFSMSKSLGGASETVSLRGLRGLFRT. Residues 447 to 467 traverse the membrane as a helical segment; the sequence is PIILTVTTVIPIGLAYLLEKI. Over 468 to 474 the chain is Vacuolar; it reads NPYIVHS. Residues 475–495 traverse the membrane as a helical segment; sequence SQFAVWSMMLSVWIFVAWFLA. The Cytoplasmic portion of the chain corresponds to 496–508; the sequence is RVADFFRPSALHR. Residues 509–529 form a helical membrane-spanning segment; the sequence is AYSYTWIFIVTWIMLVISTVY. Residues 530–533 are Vacuolar-facing; sequence ANQK. The helical transmembrane segment at 534–554 threads the bilayer; the sequence is GIAAGYFTFFYFAAVFLATWV. Topologically, residues 555 to 671 are cytoplasmic; it reads SYLELFSLPR…WSWTLPRWTW (117 aa). Residues 579 to 620 are disordered; the sequence is RSSSLSSRLLTPSADELPSDIGPNGAENVGDPDETDPTESTS. The chain crosses the membrane as a helical span at residues 672–692; the sequence is ILQLLLLAPIVIILVGQVGLL. Residues 693–708 lie on the Vacuolar side of the membrane; the sequence is LTTAMSQIGSDGVSTF. Residues 709–729 form a helical membrane-spanning segment; the sequence is IVYLACALFSTLLFAPLLPFI. Residues 730–736 are Cytoplasmic-facing; sequence HRFTYHV. Residues 737-757 traverse the membrane as a helical segment; sequence PTFLLLIFIGTLIYNLVAFPF. Topologically, residues 758-992 are vacuolar; that stretch reads SPANRLKIFF…VEASHDFIIQ (235 aa). 3 N-linked (GlcNAc...) asparagine glycosylation sites follow: Asn805, Asn846, and Asn954.

It belongs to the peptidase M28 family. It depends on Zn(2+) as a cofactor.

The protein localises to the vacuole membrane. Its function is as follows. May be involved in vacuolar sorting and osmoregulation. The polypeptide is Vacuolar membrane protease (Paracoccidioides brasiliensis (strain Pb03)).